The chain runs to 459 residues: MGVVKGLLALALVLNVVVVSNGGKSSNFVRKTNKNRDMPLDSDVFRVPPGYNAPQQVHITQGDLVGRAMIISWVTMDEPGSSAVRYWSEKNGRKRIAKGKMSTYRFFNYSSGFIHHTTIRKLKYNTKYYYEVGLRNTTRRFSFITPPQTGLDVPYTFGLIGDLGQSFDSNTTLSHYELSPKKGQTVLFVGDLSYADRYPNHDNVRWDTWGRFTERSVAYQPWIWTAGNHEIEFAPEINETEPFKPFSYRYHVPYEASQSTSPFWYSIKRASAHIIVLSSYSAYGRGTPQYTWLKKELRKVKRSETPWLIVLMHSPLYNSYNHHFMEGEAMRTKFEAWFVKYKVDVVFAGHVHAYERSERVSNIAYKITNGLCTPVKDQSAPVYITIGDAGNYGVIDSNMIQPQPEYSAFREASFGHGMFDIKNRTHAHFSWNRNQDGVAVEADSVWFFNRHWYPVDDST.

Positions 1–22 (MGVVKGLLALALVLNVVVVSNG) are cleaved as a signal peptide. Blocked amino end (Gly) is present on G23. N-linked (GlcNAc...) asparagine; partial glycosylation is present at N108. A glycan (N-linked (GlcNAc...) asparagine) is linked at N136. Residue D162 coordinates Fe cation. N170 carries N-linked (GlcNAc...) asparagine glycosylation. Fe cation contacts are provided by D191 and Y194. D191 contacts Zn(2+). N228 provides a ligand contact to Zn(2+). N238 is a glycosylation site (N-linked (GlcNAc...) asparagine). Zn(2+) is bound at residue H313. H323 acts as the Proton donor in catalysis. A Zn(2+)-binding site is contributed by H350. H352 contributes to the Fe cation binding site. An N-linked (GlcNAc...) asparagine glycan is attached at N423.

Belongs to the metallophosphoesterase superfamily. Purple acid phosphatase family. Homodimer; disulfide-linked. Fe cation serves as cofactor. Zn(2+) is required as a cofactor.

Its subcellular location is the secreted. The enzyme catalyses a phosphate monoester + H2O = an alcohol + phosphate. Its activity is regulated as follows. Inhibited by compounds CC24201, CC27209, and MO07123. Inhibited by the tetraoxoanions molybdate and phosphate. Not inhibited by EDTA or tartrate. The protein is Fe(3+)-Zn(2+) purple acid phosphatase of Phaseolus vulgaris (Kidney bean).